Here is a 240-residue protein sequence, read N- to C-terminus: Mitochondrial inner membrane protease ATP23 (240 aa).

Histidine 140 serves as a coordination point for a divalent metal cation. Glutamate 141 is an active-site residue. Residue histidine 144 coordinates a divalent metal cation.

It belongs to the peptidase M76 family.

The protein resides in the mitochondrion inner membrane. Has a dual role in the assembly of mitochondrial ATPase. Acts as a protease that removes N-terminal residues of mitochondrial ATPase CF(0) subunit 6 at the intermembrane space side. Also involved in the correct assembly of the membrane-embedded ATPase CF(0) particle, probably mediating association of subunit 6 with the subunit 9 ring. The polypeptide is Mitochondrial inner membrane protease ATP23 (ATP23) (Scheffersomyces stipitis (strain ATCC 58785 / CBS 6054 / NBRC 10063 / NRRL Y-11545) (Yeast)).